The sequence spans 371 residues: Transmembrane protein 229A (371 aa).

The interval 1 to 30 (MAGSDVASEGPSPRDGATRRPGATGGLRSQ) is disordered. A run of 6 helical transmembrane segments spans residues 51–71 (LPAW…DVLV), 117–137 (AFLF…TLAG), 235–255 (FLFF…FFNV), 269–289 (LWSF…YFHL), 301–321 (VPIY…GLRM), and 334–354 (LNFM…LSVY).

This sequence belongs to the TMEM229 family.

It is found in the membrane. The chain is Transmembrane protein 229A (Tmem229a) from Mus musculus (Mouse).